A 306-amino-acid chain; its full sequence is ADP,ATP carrier protein ER-ANT1 (306 aa).

Solcar repeat units follow at residues 8–101 (ERFS…FKNL), 113–205 (KWFA…IKPI), and 213–299 (GNFL…LHQI). 5 consecutive transmembrane segments (helical) span residues 10–37 (FSAD…VKLL), 78–102 (QANV…KNLL), 111–131 (YLKW…TTSL), 181–202 (FGVS…YDTI), and 216–236 (LASF…AYPF). Arg-83 and Lys-95 together coordinate ADP. Residue Arg-240 participates in ADP binding. The important for transport activity stretch occupies residues 240 to 245 (RRRMML). Positions 240 to 245 (RRRMML) match the Nucleotide carrier signature motif motif. Residues 276–296 (VTANMLLGVAGAGVLAGYDQL) traverse the membrane as a helical segment.

This sequence belongs to the mitochondrial carrier (TC 2.A.29) family.

Its subcellular location is the endoplasmic reticulum membrane. The catalysed reaction is ADP(in) + ATP(out) = ADP(out) + ATP(in). Its function is as follows. ADP:ATP antiporter that catalyzes the exchange of ADP and ATP across the endoplasmic reticulum membrane. The sequence is that of ADP,ATP carrier protein ER-ANT1 (ER-ANT1) from Arabidopsis thaliana (Mouse-ear cress).